The chain runs to 441 residues: Protein eva-1 homolog C (441 aa).

The interval 1-23 is disordered; sequence MLLPGRARQPPTPQPVQHPGLRR. Residues 1–48 form the signal peptide; that stretch reads MLLPGRARQPPTPQPVQHPGLRRQVEPPGQLLRLFYCTVLVCSKEISA. At 49 to 322 the chain is on the extracellular side; the sequence is LTDFSGYLTK…AYIRAHPERA (274 aa). An N-linked (GlcNAc...) asparagine glycan is attached at N62. The SUEL-type lectin 1 domain maps to 67 to 159; sequence ACDGDYLNLQ…KYLLVSFKCQ (93 aa). N165 carries N-linked (GlcNAc...) asparagine glycosylation. An SUEL-type lectin 2 domain is found at 168–260; the sequence is VCEDQELKLH…KYLTVTYACV (93 aa). Residues 323 to 343 form a helical membrane-spanning segment; the sequence is ALLFVSSVCIGLALTLCALVI. At 344–441 the chain is on the cytoplasmic side; sequence RESCAKDFRD…SLPRNMGQFY (98 aa). The disordered stretch occupies residues 362 to 390; sequence VPGSDKVEEDSEDEEEEEDPSESDFPGEL. A compositionally biased stretch (acidic residues) spans 368 to 383; it reads VEEDSEDEEEEEDPSE.

The protein belongs to the EVA1 family. Ubiquitous.

It localises to the membrane. Functionally, binds heparin. In Homo sapiens (Human), this protein is Protein eva-1 homolog C (EVA1C).